The chain runs to 151 residues: Large ribosomal subunit protein bL9 (151 aa).

It belongs to the bacterial ribosomal protein bL9 family.

Binds to the 23S rRNA. This chain is Large ribosomal subunit protein bL9, found in Rhodococcus opacus (strain B4).